We begin with the raw amino-acid sequence, 255 residues long: Thiazole synthase (255 aa).

Lysine 96 functions as the Schiff-base intermediate with DXP in the catalytic mechanism. 1-deoxy-D-xylulose 5-phosphate is bound by residues glycine 157, 183-184, and 205-206; these read AG and NT.

It belongs to the ThiG family. Homotetramer. Forms heterodimers with either ThiH or ThiS.

It localises to the cytoplasm. It carries out the reaction [ThiS sulfur-carrier protein]-C-terminal-Gly-aminoethanethioate + 2-iminoacetate + 1-deoxy-D-xylulose 5-phosphate = [ThiS sulfur-carrier protein]-C-terminal Gly-Gly + 2-[(2R,5Z)-2-carboxy-4-methylthiazol-5(2H)-ylidene]ethyl phosphate + 2 H2O + H(+). Its pathway is cofactor biosynthesis; thiamine diphosphate biosynthesis. Catalyzes the rearrangement of 1-deoxy-D-xylulose 5-phosphate (DXP) to produce the thiazole phosphate moiety of thiamine. Sulfur is provided by the thiocarboxylate moiety of the carrier protein ThiS. In vitro, sulfur can be provided by H(2)S. The polypeptide is Thiazole synthase (Staphylococcus haemolyticus (strain JCSC1435)).